The chain runs to 566 residues: Glutamate--tRNA ligase (566 aa).

The 'HIGH' region motif lies at 105–115 (PNPDGPIHLGN).

This sequence belongs to the class-I aminoacyl-tRNA synthetase family. Glutamate--tRNA ligase type 2 subfamily.

It localises to the cytoplasm. The catalysed reaction is tRNA(Glu) + L-glutamate + ATP = L-glutamyl-tRNA(Glu) + AMP + diphosphate. Functionally, catalyzes the attachment of glutamate to tRNA(Glu) in a two-step reaction: glutamate is first activated by ATP to form Glu-AMP and then transferred to the acceptor end of tRNA(Glu). This is Glutamate--tRNA ligase from Sulfurisphaera tokodaii (strain DSM 16993 / JCM 10545 / NBRC 100140 / 7) (Sulfolobus tokodaii).